We begin with the raw amino-acid sequence, 164 residues long: Shikimate kinase (164 aa).

10–15 is a binding site for ATP; it reads GVGKTT. Thr14 is a Mg(2+) binding site. Substrate contacts are provided by Asp28, Arg52, and Gly75. Arg116 contributes to the ATP binding site. A substrate-binding site is contributed by Arg134. Arg151 lines the ATP pocket.

It belongs to the shikimate kinase family. Monomer. Mg(2+) is required as a cofactor.

The protein resides in the cytoplasm. The catalysed reaction is shikimate + ATP = 3-phosphoshikimate + ADP + H(+). It functions in the pathway metabolic intermediate biosynthesis; chorismate biosynthesis; chorismate from D-erythrose 4-phosphate and phosphoenolpyruvate: step 5/7. Its function is as follows. Catalyzes the specific phosphorylation of the 3-hydroxyl group of shikimic acid using ATP as a cosubstrate. In Streptococcus equi subsp. zooepidemicus (strain MGCS10565), this protein is Shikimate kinase.